The sequence spans 214 residues: Cytochrome b (214 aa).

Helical transmembrane passes span 31–51, 75–96, 111–131, and 176–196; these read FGSMLLICLMIQTTTGFFLAI, WIMQNTHAIGASLFFICIYTHI, WLSGTTLLIILMATAFFGYVL, and FFALHFILPFAIISLSSIHIL. Heme b is bound by residues His81 and His95. Heme b is bound by residues His180 and His194. An a ubiquinone-binding site is contributed by His199.

Belongs to the cytochrome b family. The cytochrome bc1 complex contains 3 respiratory subunits (MT-CYB, CYC1 and UQCRFS1), 2 core proteins (UQCRC1 and UQCRC2) and probably 6 low-molecular weight proteins. It depends on heme b as a cofactor.

The protein localises to the mitochondrion inner membrane. Its function is as follows. Component of the ubiquinol-cytochrome c reductase complex (complex III or cytochrome b-c1 complex) that is part of the mitochondrial respiratory chain. The b-c1 complex mediates electron transfer from ubiquinol to cytochrome c. Contributes to the generation of a proton gradient across the mitochondrial membrane that is then used for ATP synthesis. The protein is Cytochrome b (MT-CYB) of Lachesis muta muta (Bushmaster).